Consider the following 372-residue polypeptide: THAP domain-containing protein 5 (372 aa).

Residues 1–85 (MTRYCAATRC…LKPNAIPTLF (85 aa)) form a THAP-type zinc finger. Residues 306 to 362 (TDRHYLRQKIAKLQSKIAVLEAQENATLSRLRLLESVIAKLKQENLLSDEKLKILEN) are a coiled coil.

The protein resides in the nucleus. The polypeptide is THAP domain-containing protein 5 (thap5) (Xenopus laevis (African clawed frog)).